We begin with the raw amino-acid sequence, 536 residues long: Zinc finger protein 623 (536 aa).

The disordered stretch occupies residues 57–77; the sequence is GELLGNPEGQSLGSSPSQDRG. Residues 64-74 are compositionally biased toward polar residues; the sequence is EGQSLGSSPSQ. C2H2-type zinc fingers lie at residues 123–145, 151–173, 179–201, 207–229, 235–257, 263–285, 291–313, 319–341, 347–369, 375–397, 403–425, 431–453, and 459–481; these read NPCDICGKTFTFNSDLVRHRISH, YTCDQCGKGFGQSSHLMEHQRIH, YVCNVCGKDFIHYSGLIEHQRVH, FKCAQCGKAFCHSSDLIRHQRVH, FECKECGKGFSQSSLLIRHQRIH, YECNECGKSFIRSSSLIRHYQIH, YECKECGKAFRHRSDLIEHQRIH, FECNECGKAFIRSSKLIQHQRIH, YVCNECGKRFSQTSNFTQHQRIH, YECNECGKAFFLSSYLIRHQKIH, YECKECGKAFLQKAHLTEHQKIH, FECKDCGKAFIQSSKLLLHQIIH, and YVCSYCGKGFIQRSNFLQHQKIH. Lys445 participates in a covalent cross-link: Glycyl lysine isopeptide (Lys-Gly) (interchain with G-Cter in SUMO2). Residues 513–536 form a disordered region; that stretch reads LSLSKAPIHLGERSVDKGEHTGNL. The segment covering 522–536 has biased composition (basic and acidic residues); it reads LGERSVDKGEHTGNL.

Belongs to the krueppel C2H2-type zinc-finger protein family.

The protein resides in the nucleus. In terms of biological role, may be involved in transcriptional regulation. This Homo sapiens (Human) protein is Zinc finger protein 623 (ZNF623).